We begin with the raw amino-acid sequence, 347 residues long: Protein RecA (347 aa).

67-74 (GPESSGKT) lines the ATP pocket. A disordered region spans residues 327-347 (ALGLSSPTPKENGKEKGKAKP). Positions 337–347 (ENGKEKGKAKP) are enriched in basic and acidic residues.

It belongs to the RecA family.

Its subcellular location is the cytoplasm. Can catalyze the hydrolysis of ATP in the presence of single-stranded DNA, the ATP-dependent uptake of single-stranded DNA by duplex DNA, and the ATP-dependent hybridization of homologous single-stranded DNAs. It interacts with LexA causing its activation and leading to its autocatalytic cleavage. The sequence is that of Protein RecA from Desulforapulum autotrophicum (strain ATCC 43914 / DSM 3382 / VKM B-1955 / HRM2) (Desulfobacterium autotrophicum).